The primary structure comprises 476 residues: MSYAQTKTQTKSGYKAGVQDYRLTYYTPDYTPKDTDILAAFRVTPQPGVPFEEAAAAVAAESSTGTWTTVWTDLLTDLDRYKGRCYDIEPVPGEDNQFIAYIAYPLDLFEEGSITNVLTSIVGNVFGFKALRALRLEDIRFPVAYIKTFQGPPHGIQVERDKLNKYGRPLLGCTIKPKLGLSAKNYGRAVYECLRGGLDFTKDDENINSAPFQRWRDRFLFVADAITKAQAETGEIKGHYLNVTAPTCEEMLKRAEYAKELKQPIIMHDYLTAGFTANTTLARWCRDNGVLLHIHRAMHAVIDRQKNHGIHFRVLAKALRLSGGDHIHTGTVVGKLEGERGITMGFVDLLRENYVEQDKSRGIYFTQDWASLPGVMAVASGGIHVWHMPALVEIFGDDSVLQFGGGTLGHPWGNAPGATANRVALEACVQARNEGRNLAREGNDVIREAAKWSPELAVACELWKEIKFEFEAMDTV.

2 residues coordinate substrate: Asn124 and Thr174. The active-site Proton acceptor is the Lys176. Residue Lys178 participates in substrate binding. Mg(2+) contacts are provided by Lys202, Asp204, and Glu205. The residue at position 202 (Lys202) is an N6-carboxylysine. Residue His295 is the Proton acceptor of the active site. Positions 296, 328, and 380 each coordinate substrate.

It belongs to the RuBisCO large chain family. Type I subfamily. In terms of assembly, heterohexadecamer of 8 large chains and 8 small chains; disulfide-linked. The disulfide link is formed within the large subunit homodimers. Forms complexes of many stoichiometries with Raf1 with and without RbcS. RuBisCO interacts with the C-terminus of CcmM. It depends on Mg(2+) as a cofactor. The disulfide bond which can form in the large chain dimeric partners within the hexadecamer appears to be associated with oxidative stress and protein turnover.

Its subcellular location is the carboxysome. It carries out the reaction 2 (2R)-3-phosphoglycerate + 2 H(+) = D-ribulose 1,5-bisphosphate + CO2 + H2O. It catalyses the reaction D-ribulose 1,5-bisphosphate + O2 = 2-phosphoglycolate + (2R)-3-phosphoglycerate + 2 H(+). Its function is as follows. RuBisCO catalyzes two reactions: the carboxylation of D-ribulose 1,5-bisphosphate, the primary event in carbon dioxide fixation, as well as the oxidative fragmentation of the pentose substrate in the photorespiration process. Both reactions occur simultaneously and in competition at the same active site. The polypeptide is Ribulose bisphosphate carboxylase large chain (Nostoc sp. (strain PCC 7120 / SAG 25.82 / UTEX 2576)).